The chain runs to 151 residues: Transcriptional regulator MraZ (151 aa).

2 SpoVT-AbrB domains span residues 5-52 and 81-124; these read ATAV…PLDE and ATEC…SDVE.

Belongs to the MraZ family. Forms oligomers.

The protein resides in the cytoplasm. The protein localises to the nucleoid. This Haemophilus influenzae (strain 86-028NP) protein is Transcriptional regulator MraZ.